We begin with the raw amino-acid sequence, 333 residues long: D-lactate dehydrogenase (333 aa).

Residues 156–157 (HI), Asp176, 207–208 (VP), Asn213, 234–236 (VSR), and Asp260 contribute to the NAD(+) site. Arg236 is an active-site residue. The active site involves Glu265. The Proton donor role is filled by His297.

This sequence belongs to the D-isomer specific 2-hydroxyacid dehydrogenase family. As to quaternary structure, homodimer.

The enzyme catalyses (R)-lactate + NAD(+) = pyruvate + NADH + H(+). The sequence is that of D-lactate dehydrogenase (ldhA) from Lactobacillus delbrueckii subsp. bulgaricus (strain ATCC 11842 / DSM 20081 / BCRC 10696 / JCM 1002 / NBRC 13953 / NCIMB 11778 / NCTC 12712 / WDCM 00102 / Lb 14).